The sequence spans 325 residues: NADH-quinone oxidoreductase subunit H (325 aa).

Transmembrane regions (helical) follow at residues 8–28 (VIDI…VVTC), 81–101 (GIFT…FAIV), 114–134 (IGVL…LFAG), 159–179 (FLGL…LGAI), 186–206 (LWNV…GVAV), 237–257 (FFVG…TLFF), 265–285 (LPPF…FILI), and 304–324 (ICLP…LYNA).

Belongs to the complex I subunit 1 family. In terms of assembly, NDH-1 is composed of 13 different subunits. Subunits NuoA, H, J, K, L, M, N constitute the membrane sector of the complex.

Its subcellular location is the cell inner membrane. It catalyses the reaction a quinone + NADH + 5 H(+)(in) = a quinol + NAD(+) + 4 H(+)(out). NDH-1 shuttles electrons from NADH, via FMN and iron-sulfur (Fe-S) centers, to quinones in the respiratory chain. The immediate electron acceptor for the enzyme in this species is believed to be ubiquinone. Couples the redox reaction to proton translocation (for every two electrons transferred, four hydrogen ions are translocated across the cytoplasmic membrane), and thus conserves the redox energy in a proton gradient. This subunit may bind ubiquinone. This is NADH-quinone oxidoreductase subunit H from Sodalis glossinidius (strain morsitans).